Consider the following 155-residue polypeptide: NADPH-dependent 7-cyano-7-deazaguanine reductase (155 aa).

The Thioimide intermediate role is filled by Cys-52. The active-site Proton donor is the Asp-59. Residues 74–76 and 93–94 contribute to the substrate site; these read VES and HE.

The protein belongs to the GTP cyclohydrolase I family. QueF type 1 subfamily.

The protein localises to the cytoplasm. The enzyme catalyses 7-aminomethyl-7-carbaguanine + 2 NADP(+) = 7-cyano-7-deazaguanine + 2 NADPH + 3 H(+). The protein operates within tRNA modification; tRNA-queuosine biosynthesis. Functionally, catalyzes the NADPH-dependent reduction of 7-cyano-7-deazaguanine (preQ0) to 7-aminomethyl-7-deazaguanine (preQ1). This is NADPH-dependent 7-cyano-7-deazaguanine reductase from Syntrophobacter fumaroxidans (strain DSM 10017 / MPOB).